The following is a 250-amino-acid chain: Acetylglutamate kinase (250 aa).

Residues 41-42, arginine 63, and asparagine 156 contribute to the substrate site; that span reads GG.

Belongs to the acetylglutamate kinase family. ArgB subfamily.

It localises to the cytoplasm. The catalysed reaction is N-acetyl-L-glutamate + ATP = N-acetyl-L-glutamyl 5-phosphate + ADP. The protein operates within amino-acid biosynthesis; L-arginine biosynthesis; N(2)-acetyl-L-ornithine from L-glutamate: step 2/4. Its function is as follows. Catalyzes the ATP-dependent phosphorylation of N-acetyl-L-glutamate. In Listeria monocytogenes serotype 4b (strain CLIP80459), this protein is Acetylglutamate kinase.